The chain runs to 82 residues: Large ribosomal subunit protein uL23 (82 aa).

It belongs to the universal ribosomal protein uL23 family. As to quaternary structure, part of the 50S ribosomal subunit. Contacts protein L29.

Binds to 23S rRNA. One of the proteins that surrounds the polypeptide exit tunnel on the outside of the ribosome. The protein is Large ribosomal subunit protein uL23 of Sulfolobus acidocaldarius (strain ATCC 33909 / DSM 639 / JCM 8929 / NBRC 15157 / NCIMB 11770).